The sequence spans 304 residues: tRNA dimethylallyltransferase (304 aa).

ATP is bound at residue 10 to 17 (GPTASGKT). 12-17 (TASGKT) is a binding site for substrate. 3 interaction with substrate tRNA regions span residues 35–38 (DSAL), 159–163 (QRLSR), and 240–245 (RCVGYR).

Belongs to the IPP transferase family. Monomer. It depends on Mg(2+) as a cofactor.

The enzyme catalyses adenosine(37) in tRNA + dimethylallyl diphosphate = N(6)-dimethylallyladenosine(37) in tRNA + diphosphate. Functionally, catalyzes the transfer of a dimethylallyl group onto the adenine at position 37 in tRNAs that read codons beginning with uridine, leading to the formation of N6-(dimethylallyl)adenosine (i(6)A). The protein is tRNA dimethylallyltransferase of Shewanella sp. (strain W3-18-1).